We begin with the raw amino-acid sequence, 975 residues long: Translation initiation factor IF-2 (975 aa).

Disordered regions lie at residues 49–110 and 193–339; these read KLSG…APKA and AAAP…GRGA. Residues 63–72 show a composition bias toward basic residues; it reads KKTAARKAAP. Low complexity-rich tracts occupy residues 73-94, 193-202, and 209-225; these read KKAA…AKTP, AAAPEAPAPQ, and VVGT…ASAP. Basic and acidic residues predominate over residues 308 to 318; it reads GADRGGRDFDK. Low complexity predominate over residues 324 to 336; that stretch reads GPSAPAAGPAAAG. Residues 469–639 enclose the tr-type G domain; sequence TRPPVVTVMG…KLVAEVAELK (171 aa). The interval 478–485 is G1; the sequence is GHVDHGKT. 478-485 lines the GTP pocket; sequence GHVDHGKT. The segment at 503-507 is G2; sequence GITQH. A G3 region spans residues 525-528; the sequence is DTPG. GTP-binding positions include 525–529 and 579–582; these read DTPGH and NKID. The G4 stretch occupies residues 579-582; the sequence is NKID. The interval 615–617 is G5; sequence SAL.

The protein belongs to the TRAFAC class translation factor GTPase superfamily. Classic translation factor GTPase family. IF-2 subfamily.

The protein localises to the cytoplasm. In terms of biological role, one of the essential components for the initiation of protein synthesis. Protects formylmethionyl-tRNA from spontaneous hydrolysis and promotes its binding to the 30S ribosomal subunits. Also involved in the hydrolysis of GTP during the formation of the 70S ribosomal complex. In Bdellovibrio bacteriovorus (strain ATCC 15356 / DSM 50701 / NCIMB 9529 / HD100), this protein is Translation initiation factor IF-2.